The following is a 132-amino-acid chain: Ribosome-binding factor A (132 aa).

This sequence belongs to the RbfA family. Monomer. Binds 30S ribosomal subunits, but not 50S ribosomal subunits or 70S ribosomes.

The protein localises to the cytoplasm. In terms of biological role, one of several proteins that assist in the late maturation steps of the functional core of the 30S ribosomal subunit. Associates with free 30S ribosomal subunits (but not with 30S subunits that are part of 70S ribosomes or polysomes). Required for efficient processing of 16S rRNA. May interact with the 5'-terminal helix region of 16S rRNA. This is Ribosome-binding factor A from Bordetella avium (strain 197N).